The following is a 207-amino-acid chain: Phosphoribosylglycinamide formyltransferase (207 aa).

13–15 (GSN) is a N(1)-(5-phospho-beta-D-ribosyl)glycinamide binding site. Residues 100–103 (MHIL) and N120 contribute to the (6R)-10-formyltetrahydrofolate site. The active-site Proton donor is the H122. D162 contacts (6R)-10-formyltetrahydrofolate. Residue E191 coordinates N(1)-(5-phospho-beta-D-ribosyl)glycinamide.

The protein belongs to the GART family.

The enzyme catalyses N(1)-(5-phospho-beta-D-ribosyl)glycinamide + (6R)-10-formyltetrahydrofolate = N(2)-formyl-N(1)-(5-phospho-beta-D-ribosyl)glycinamide + (6S)-5,6,7,8-tetrahydrofolate + H(+). Its pathway is purine metabolism; IMP biosynthesis via de novo pathway; N(2)-formyl-N(1)-(5-phospho-D-ribosyl)glycinamide from N(1)-(5-phospho-D-ribosyl)glycinamide (10-formyl THF route): step 1/1. The protein is Phosphoribosylglycinamide formyltransferase (ade5) of Schizosaccharomyces pombe (strain 972 / ATCC 24843) (Fission yeast).